The primary structure comprises 101 residues: Small ribosomal subunit protein uS14 (101 aa).

This sequence belongs to the universal ribosomal protein uS14 family. In terms of assembly, part of the 30S ribosomal subunit. Contacts proteins S3 and S10.

In terms of biological role, binds 16S rRNA, required for the assembly of 30S particles and may also be responsible for determining the conformation of the 16S rRNA at the A site. This chain is Small ribosomal subunit protein uS14, found in Actinobacillus pleuropneumoniae serotype 5b (strain L20).